A 382-amino-acid polypeptide reads, in one-letter code: ATP phosphoribosyltransferase regulatory subunit (382 aa).

This sequence belongs to the class-II aminoacyl-tRNA synthetase family. HisZ subfamily. In terms of assembly, heteromultimer composed of HisG and HisZ subunits.

The protein localises to the cytoplasm. The protein operates within amino-acid biosynthesis; L-histidine biosynthesis; L-histidine from 5-phospho-alpha-D-ribose 1-diphosphate: step 1/9. Functionally, required for the first step of histidine biosynthesis. May allow the feedback regulation of ATP phosphoribosyltransferase activity by histidine. This chain is ATP phosphoribosyltransferase regulatory subunit, found in Burkholderia cenocepacia (strain ATCC BAA-245 / DSM 16553 / LMG 16656 / NCTC 13227 / J2315 / CF5610) (Burkholderia cepacia (strain J2315)).